The sequence spans 256 residues: Triosephosphate isomerase (256 aa).

A substrate-binding site is contributed by N9–K11. Residue H95 is the Electrophile of the active site. E167 serves as the catalytic Proton acceptor. Substrate contacts are provided by residues G173, S213, and G234–G235.

Belongs to the triosephosphate isomerase family. In terms of assembly, homodimer.

Its subcellular location is the cytoplasm. The enzyme catalyses D-glyceraldehyde 3-phosphate = dihydroxyacetone phosphate. It participates in carbohydrate biosynthesis; gluconeogenesis. Its pathway is carbohydrate degradation; glycolysis; D-glyceraldehyde 3-phosphate from glycerone phosphate: step 1/1. Its function is as follows. Involved in the gluconeogenesis. Catalyzes stereospecifically the conversion of dihydroxyacetone phosphate (DHAP) to D-glyceraldehyde-3-phosphate (G3P). This is Triosephosphate isomerase from Symbiobacterium thermophilum (strain DSM 24528 / JCM 14929 / IAM 14863 / T).